Reading from the N-terminus, the 100-residue chain is Replication restart protein PriB (100 aa).

Residues 1-99 (MGFNNLVSLA…LRIQNIQEYK (99 aa)) form the SSB domain.

This sequence belongs to the PriB family. Homodimer. Interacts with PriA and DnaT. Component of the replication restart primosome. Primosome assembly occurs via a 'hand-off' mechanism. PriA binds to replication forks, subsequently PriB then DnaT bind; DnaT then displaces ssDNA to generate the helicase loading substrate.

Its function is as follows. Involved in the restart of stalled replication forks, which reloads the replicative helicase on sites other than the origin of replication; the PriA-PriB pathway is the major replication restart pathway. During primosome assembly it facilitates complex formation between PriA and DnaT on DNA; stabilizes PriA on DNA. Stimulates the DNA unwinding activity of PriA helicase. This chain is Replication restart protein PriB, found in Neisseria meningitidis serogroup A / serotype 4A (strain DSM 15465 / Z2491).